Reading from the N-terminus, the 109-residue chain is UPF0154 protein UPA3_0273 (109 aa).

A helical membrane pass occupies residues 42 to 62 (VGLGIGIVLFLIAGLIIGYFI).

The protein belongs to the UPF0154 family.

The protein localises to the cell membrane. This is UPF0154 protein UPA3_0273 from Ureaplasma parvum serovar 3 (strain ATCC 27815 / 27 / NCTC 11736).